A 317-amino-acid chain; its full sequence is Tegument protein UL14 homolog (317 aa).

Positions 166-291 (IAADPHSPRS…QKWLGGIPPL (126 aa)) are disordered. Positions 182–195 (KAPEDARCGARKPG) are enriched in basic and acidic residues. Residues 198–211 (NNYTPSAQPRSQET) show a composition bias toward polar residues. Composition is skewed to basic and acidic residues over residues 217-236 (ASPDEGTRLGDRTRDLEHHS) and 249-265 (SERRRLGVVHQREKSSE).

It belongs to the alphaherpesvirinae HHV-1 UL14 protein family.

The protein resides in the virion tegument. Its subcellular location is the host cytoplasm. The protein localises to the host nucleus. Contributes to the nuclear transport of the viral transcriptional activator VP16 during the early phase of infection. Therefore, participates indirectly in the regulation of the immediate-early gene expression. Additionally, seems to be important for efficient nuclear targeting of capsids. The polypeptide is Tegument protein UL14 homolog (Equus caballus (Horse)).